A 356-amino-acid polypeptide reads, in one-letter code: Putative mitogen-activated protein kinase 14C (356 aa).

The Protein kinase domain maps to 20–305 (YEFVRFLGGG…AAEAMLHPYL (286 aa)). Residues 26 to 34 (LGGGSFGQV) and K49 contribute to the ATP site. The active-site Proton acceptor is D147. T177 carries the post-translational modification Phosphothreonine.

It belongs to the protein kinase superfamily. CMGC Ser/Thr protein kinase family. MAP kinase subfamily. The cofactor is Mg(2+). In terms of processing, the phosphorylation on Thr-177 activates the enzyme. A conserved Tyr, which must also be phosphorylated to activate the enzyme in closely related sequences, is replaced by His-179 in this sequence.

The catalysed reaction is L-seryl-[protein] + ATP = O-phospho-L-seryl-[protein] + ADP + H(+). It carries out the reaction L-threonyl-[protein] + ATP = O-phospho-L-threonyl-[protein] + ADP + H(+). Functionally, kinase involved in a signal transduction pathway. In Drosophila melanogaster (Fruit fly), this protein is Putative mitogen-activated protein kinase 14C (p38c).